We begin with the raw amino-acid sequence, 431 residues long: Ammonium transporter 3 (431 aa).

Residues 1–27 (MEQFSTSSSESSDSSSEYSLEFYMDTS) lie on the Extracellular side of the membrane. A helical membrane pass occupies residues 28 to 48 (WVLDAANLVFFMQAGFGMLEA). The Cytoplasmic portion of the chain corresponds to 49-63 (GMVRAKNTKSILLKN). Residues 64–84 (LINTAICAISYYCVGHSFAYG) traverse the membrane as a helical segment. Topologically, residues 85-102 (KVNPNSFVGFGNFFLMDY) are extracellular. The chain crosses the membrane as a helical span at residues 103-125 (THYAYWMIQWAYAATATTIATGA). Over 126–134 (MAERLQLHC) the chain is Cytoplasmic. Residues 135–155 (YILFTLVQTILIYPFVAHWIW) form a helical membrane-spanning segment. Topologically, residues 156 to 160 (SQNGW) are extracellular. A helical transmembrane segment spans residues 161–181 (LFDLGIVDFAGGAVIHIVAGI). At 182 to 211 (TGACGSFLLGPRIGRFNQESGKPKNLPGHS) the chain is on the cytoplasmic side. A helical membrane pass occupies residues 212-232 (VVLMSLGAMILWYSWYGYTAG). The Extracellular portion of the chain corresponds to 233–249 (ASLGMTRSRVLPASRVS). Residues 250–270 (VVVTLSGATGLITVLGIGKIF) form a helical membrane-spanning segment. Residues 271–300 (NGHYDLVKGINGLIAGLVSSTSSCAYIEPW) lie on the Cytoplasmic side of the membrane. Residues 301-321 (AAIIIGFIGGIVYWFSSWALL) traverse the membrane as a helical segment. Topologically, residues 322 to 333 (NWLRLDDPVDST) are extracellular. A helical membrane pass occupies residues 334–354 (AIHLFGGCWSLISVAFFATHG). The Cytoplasmic segment spans residues 355–357 (RVR). A helical membrane pass occupies residues 358 to 378 (NPDIILPGGIFYGGGISLLWV). Residue Q379 is a topological domain, extracellular. A helical membrane pass occupies residues 380-400 (LVGMVLAILWAGFLSGIFFFT). The Cytoplasmic segment spans residues 401–431 (MDYFGKLRVDVDTELAGLDNSNHGGSAYIFD).

It belongs to the ammonia transporter channel (TC 1.A.11.2) family.

Its subcellular location is the cell membrane. The protein resides in the endosome membrane. It is found in the cytoplasmic vesicle. The protein localises to the phagosome membrane. Functionally, ammonium transporter that mediates the import of ammonium in prespore cells. Controls ammonium homeostasis during growth and development. Ammonium has been shown to function as a morphogen at multiple steps during the development. May function as an ammonia sensor that relays information concerning ammonia concentrations to the signaling pathway involved in the slug versus culmination choice and regulates prestalk gene expression. This is Ammonium transporter 3 (amtC) from Dictyostelium discoideum (Social amoeba).